Consider the following 171-residue polypeptide: Putative phosphoesterase BH1439 (171 aa).

His-34 (proton donor) is an active-site residue. Short sequence motifs (HXTX) lie at residues 34–37 (HVTL) and 115–118 (HLTI). His-115 acts as the Proton acceptor in catalysis.

This sequence belongs to the 2H phosphoesterase superfamily. YjcG family.

This is Putative phosphoesterase BH1439 from Halalkalibacterium halodurans (strain ATCC BAA-125 / DSM 18197 / FERM 7344 / JCM 9153 / C-125) (Bacillus halodurans).